The sequence spans 580 residues: Arginine--tRNA ligase (580 aa).

The 'HIGH' region motif lies at 131–141; that stretch reads ANPTGPMHVGH.

Belongs to the class-I aminoacyl-tRNA synthetase family. In terms of assembly, monomer.

The protein localises to the cytoplasm. It catalyses the reaction tRNA(Arg) + L-arginine + ATP = L-arginyl-tRNA(Arg) + AMP + diphosphate. The protein is Arginine--tRNA ligase of Cereibacter sphaeroides (strain KD131 / KCTC 12085) (Rhodobacter sphaeroides).